The sequence spans 279 residues: 4-hydroxy-3-methylbut-2-enyl diphosphate reductase (279 aa).

Position 12 (Cys-12) interacts with [4Fe-4S] cluster. The (2E)-4-hydroxy-3-methylbut-2-enyl diphosphate site is built by His-42 and His-74. The dimethylallyl diphosphate site is built by His-42 and His-74. Isopentenyl diphosphate is bound by residues His-42 and His-74. Residue Cys-96 participates in [4Fe-4S] cluster binding. (2E)-4-hydroxy-3-methylbut-2-enyl diphosphate is bound at residue His-124. His-124 contributes to the dimethylallyl diphosphate binding site. His-124 provides a ligand contact to isopentenyl diphosphate. The active-site Proton donor is Glu-126. Thr-162 lines the (2E)-4-hydroxy-3-methylbut-2-enyl diphosphate pocket. [4Fe-4S] cluster is bound at residue Cys-190. Ser-218, Ser-219, Asn-220, and Ser-263 together coordinate (2E)-4-hydroxy-3-methylbut-2-enyl diphosphate. Residues Ser-218, Ser-219, Asn-220, and Ser-263 each coordinate dimethylallyl diphosphate. The isopentenyl diphosphate site is built by Ser-218, Ser-219, Asn-220, and Ser-263.

Belongs to the IspH family. It depends on [4Fe-4S] cluster as a cofactor.

The catalysed reaction is isopentenyl diphosphate + 2 oxidized [2Fe-2S]-[ferredoxin] + H2O = (2E)-4-hydroxy-3-methylbut-2-enyl diphosphate + 2 reduced [2Fe-2S]-[ferredoxin] + 2 H(+). The enzyme catalyses dimethylallyl diphosphate + 2 oxidized [2Fe-2S]-[ferredoxin] + H2O = (2E)-4-hydroxy-3-methylbut-2-enyl diphosphate + 2 reduced [2Fe-2S]-[ferredoxin] + 2 H(+). It functions in the pathway isoprenoid biosynthesis; dimethylallyl diphosphate biosynthesis; dimethylallyl diphosphate from (2E)-4-hydroxy-3-methylbutenyl diphosphate: step 1/1. It participates in isoprenoid biosynthesis; isopentenyl diphosphate biosynthesis via DXP pathway; isopentenyl diphosphate from 1-deoxy-D-xylulose 5-phosphate: step 6/6. Catalyzes the conversion of 1-hydroxy-2-methyl-2-(E)-butenyl 4-diphosphate (HMBPP) into a mixture of isopentenyl diphosphate (IPP) and dimethylallyl diphosphate (DMAPP). Acts in the terminal step of the DOXP/MEP pathway for isoprenoid precursor biosynthesis. The protein is 4-hydroxy-3-methylbut-2-enyl diphosphate reductase of Alkaliphilus oremlandii (strain OhILAs) (Clostridium oremlandii (strain OhILAs)).